A 428-amino-acid chain; its full sequence is Adenylosuccinate synthetase (428 aa).

GTP is bound by residues 12–18 and 40–42; these read GDEGKGK and GHS. The active-site Proton acceptor is aspartate 13. Mg(2+) contacts are provided by aspartate 13 and glycine 40. IMP-binding positions include 13–16, 38–41, threonine 128, arginine 142, glutamine 223, threonine 238, and arginine 302; these read DEGK and NAGH. Catalysis depends on histidine 41, which acts as the Proton donor. 298–304 is a binding site for substrate; sequence VTTGRPR. GTP-binding positions include arginine 304, 330–332, and 412–414; these read KLD and GTG.

This sequence belongs to the adenylosuccinate synthetase family. In terms of assembly, homodimer. Requires Mg(2+) as cofactor.

Its subcellular location is the cytoplasm. The catalysed reaction is IMP + L-aspartate + GTP = N(6)-(1,2-dicarboxyethyl)-AMP + GDP + phosphate + 2 H(+). Its pathway is purine metabolism; AMP biosynthesis via de novo pathway; AMP from IMP: step 1/2. Its function is as follows. Plays an important role in the de novo pathway of purine nucleotide biosynthesis. Catalyzes the first committed step in the biosynthesis of AMP from IMP. This is Adenylosuccinate synthetase from Bifidobacterium longum (strain NCC 2705).